Consider the following 382-residue polypeptide: MAGRNWLDTFGRAKSLDVNADLDRGYEAALLIQSLELEYYGDRPIRPDLELSVPSSVQATVLRKFRAAISVCRASLDKLEYQRGELDPQELRQLQLIESVVNRYSPRRTASAPTISRSPDPLPRSLLGIFDTLRRQLNPTAEATLVAGFRRRRDSTLISLKVLLLLILVPLLVQQVSRTYIISPAVDRYAPDLPFLSYPKPQLEEQAVEKLRVYKAEIEFDALLRGDSIPTQEELQKKLSAKAEELKQEADSESTHAVKNVIADLAATVAFVVVCVFSREELRVLRGFFDEAVYGLSDSAKAFAIILFTDIFVGFHSPEGWTVLLDGIANHFGFPARENFILLFIATFPVILATIFKYWIFRYLNRVSPSSVATLRGMNGGG.

Helical transmembrane passes span 156–176 (TLISLKVLLLLILVPLLVQQV), 257–277 (AVKNVIADLAATVAFVVVCVF), 305–325 (IILFTDIFVGFHSPEGWTVLL), and 340–360 (FILLFIATFPVILATIFKYWI).

It belongs to the CemA family.

The protein resides in the cell inner membrane. Required for H(+) efflux immediately after light irradiation to form a rapid H(+) concentration gradient across the thylakoid membranes. Together with PxcL, contributes to transient H(+) uptake following dark to light transition. The chain is Proton extrusion protein PxcA from Synechococcus sp. (strain WH7803).